The sequence spans 602 residues: T-box transcription factor TBX15 (602 aa).

The disordered stretch occupies residues 46–84 (ALSPAGPLGDTEDAAAHGLEPHPDSEQSTGSDSEVLTER). The segment covering 71–84 (EQSTGSDSEVLTER) has biased composition (polar residues). Positions 122–304 (LWKRFHDIGT…RNPFAKGFRD (183 aa)) form a DNA-binding region, T-box. Threonine 330 is modified (phosphothreonine). Disordered stretches follow at residues 338 to 369 (QKQQ…LSPS) and 425 to 447 (QSGT…PSLI). A compositionally biased stretch (low complexity) spans 346 to 369 (GTSPTTSSTGTPSPSASSHLLSPS). Residues 425 to 446 (QSGTTSATQPSETFMPQRTPSL) are compositionally biased toward polar residues.

In terms of assembly, can form a heterodimer with TBX18.

It localises to the nucleus. Probable transcriptional regulator involved in the development of the skeleton of the limb, vertebral column and head. Acts by controlling the number of mesenchymal precursor cells and chondrocytes. The chain is T-box transcription factor TBX15 (TBX15) from Homo sapiens (Human).